The following is a 445-amino-acid chain: Enolase (445 aa).

2 residues coordinate substrate: histidine 165 and glutamate 174. Glutamate 217 serves as the catalytic Proton donor. 3 residues coordinate Mg(2+): aspartate 252, glutamate 303, and aspartate 330. Positions 303 and 330 each coordinate substrate. Lysine 355 serves as the catalytic Proton acceptor. Substrate-binding positions include 382-385 (SHRS) and lysine 406.

Belongs to the enolase family. Homodimer. Requires Mg(2+) as cofactor.

It localises to the cytoplasm. It carries out the reaction (2R)-2-phosphoglycerate = phosphoenolpyruvate + H2O. It participates in carbohydrate degradation; glycolysis; pyruvate from D-glyceraldehyde 3-phosphate: step 4/5. The chain is Enolase (ENO) from Eimeria tenella (Coccidian parasite).